The chain runs to 551 residues: Methyl-accepting chemotaxis protein I (551 aa).

Residues 1-6 (MLKRIK) lie on the Cytoplasmic side of the membrane. A helical membrane pass occupies residues 7–30 (IVTSLLLVLAVFGLLQLTSGGLFF). The Periplasmic portion of the chain corresponds to 31-190 (NALKNDKENF…AVSDNNASYS (160 aa)). The the 3 Arg may form a positively charged pocket, which binds the alpha-carboxyl group of the attractant AA stretch occupies residues 64–73 (RNTLNRAGIR). The helical transmembrane segment at 191 to 210 (QAMWILVGVMIVVLAVIFAV) threads the bilayer. Residues 211–551 (WFGIKASLVA…ADSEENWETF (341 aa)) lie on the Cytoplasmic side of the membrane. One can recognise an HAMP domain in the interval 216-268 (ASLVAPMNRLIDSIRHIAGGDLVKPIEVDGSNEMGQLAESLRHMQGELMRTVG). In terms of domain architecture, Methyl-accepting transducer spans 273–502 (GANAIYSGAS…ESAAAAAALE (230 aa)). Residue Q297 is modified to Glutamate methyl ester (Gln). E304 is subject to Glutamate methyl ester (Glu). Q311 bears the Glutamate methyl ester (Gln) mark. 2 positions are modified to glutamate methyl ester (Glu): E493 and E502.

It belongs to the methyl-accepting chemotaxis (MCP) protein family.

The protein resides in the cell inner membrane. Its function is as follows. Receptor for the attractant L-serine and related amino acids. Is also responsible for chemotaxis away from a wide range of repellents, including leucine, indole, and weak acids. Functionally, chemotactic-signal transducers respond to changes in the concentration of attractants and repellents in the environment, transduce a signal from the outside to the inside of the cell, and facilitate sensory adaptation through the variation of the level of methylation. Attractants increase the level of methylation while repellents decrease the level of methylation, the methyl groups are added by the methyltransferase CheR and removed by the methylesterase CheB. The chain is Methyl-accepting chemotaxis protein I (tsr) from Escherichia coli (strain K12).